Consider the following 185-residue polypeptide: Ribosome-recycling factor (185 aa).

It belongs to the RRF family.

Its subcellular location is the cytoplasm. Responsible for the release of ribosomes from messenger RNA at the termination of protein biosynthesis. May increase the efficiency of translation by recycling ribosomes from one round of translation to another. The protein is Ribosome-recycling factor of Xanthomonas campestris pv. campestris (strain 8004).